The chain runs to 106 residues: Met repressor (106 aa).

It belongs to the MetJ family. Homodimer.

The protein localises to the cytoplasm. In terms of biological role, this regulatory protein, when combined with SAM (S-adenosylmethionine) represses the expression of the methionine regulon and of enzymes involved in SAM synthesis. This is Met repressor from Vibrio atlanticus (strain LGP32) (Vibrio splendidus (strain Mel32)).